The primary structure comprises 270 residues: Imidazole glycerol phosphate synthase subunit HisF (270 aa).

Catalysis depends on residues aspartate 11 and aspartate 130.

The protein belongs to the HisA/HisF family. In terms of assembly, heterodimer of HisH and HisF.

It localises to the cytoplasm. It catalyses the reaction 5-[(5-phospho-1-deoxy-D-ribulos-1-ylimino)methylamino]-1-(5-phospho-beta-D-ribosyl)imidazole-4-carboxamide + L-glutamine = D-erythro-1-(imidazol-4-yl)glycerol 3-phosphate + 5-amino-1-(5-phospho-beta-D-ribosyl)imidazole-4-carboxamide + L-glutamate + H(+). It functions in the pathway amino-acid biosynthesis; L-histidine biosynthesis; L-histidine from 5-phospho-alpha-D-ribose 1-diphosphate: step 5/9. In terms of biological role, IGPS catalyzes the conversion of PRFAR and glutamine to IGP, AICAR and glutamate. The HisF subunit catalyzes the cyclization activity that produces IGP and AICAR from PRFAR using the ammonia provided by the HisH subunit. In Sorangium cellulosum (strain So ce56) (Polyangium cellulosum (strain So ce56)), this protein is Imidazole glycerol phosphate synthase subunit HisF.